The following is a 153-amino-acid chain: Regulatory protein RecX (153 aa).

It belongs to the RecX family.

It localises to the cytoplasm. Its function is as follows. Modulates RecA activity. This is Regulatory protein RecX from Vibrio vulnificus (strain CMCP6).